The sequence spans 176 residues: Xanthine-guanine phosphoribosyltransferase (176 aa).

5-phospho-alpha-D-ribose 1-diphosphate contacts are provided by residues 51–52 (RG), Arg88, and 111–119 (DDLVDSGKT). Arg88 is a binding site for GMP. Asp112 is a binding site for Mg(2+). Guanine contacts are provided by Asp115 and Ile158. Residues Asp115 and Ile158 each contribute to the xanthine site. GMP is bound by residues 115–119 (DSGKT) and 157–158 (WI).

It belongs to the purine/pyrimidine phosphoribosyltransferase family. XGPT subfamily. In terms of assembly, homotetramer. The cofactor is Mg(2+).

The protein localises to the cell inner membrane. It carries out the reaction GMP + diphosphate = guanine + 5-phospho-alpha-D-ribose 1-diphosphate. It catalyses the reaction XMP + diphosphate = xanthine + 5-phospho-alpha-D-ribose 1-diphosphate. The enzyme catalyses IMP + diphosphate = hypoxanthine + 5-phospho-alpha-D-ribose 1-diphosphate. It functions in the pathway purine metabolism; GMP biosynthesis via salvage pathway; GMP from guanine: step 1/1. Its pathway is purine metabolism; XMP biosynthesis via salvage pathway; XMP from xanthine: step 1/1. Functionally, purine salvage pathway enzyme that catalyzes the transfer of the ribosyl-5-phosphate group from 5-phospho-alpha-D-ribose 1-diphosphate (PRPP) to the N9 position of the 6-oxopurines guanine and xanthine to form the corresponding ribonucleotides GMP (guanosine 5'-monophosphate) and XMP (xanthosine 5'-monophosphate), with the release of PPi. To a lesser extent, also acts on hypoxanthine. In Roseobacter denitrificans (strain ATCC 33942 / OCh 114) (Erythrobacter sp. (strain OCh 114)), this protein is Xanthine-guanine phosphoribosyltransferase.